The chain runs to 180 residues: NAD(P)H-quinone oxidoreductase subunit I, chloroplastic (180 aa).

4Fe-4S ferredoxin-type domains are found at residues 55-84 (GRIHFEFDKCIACEVCVRVCPIDLPVVDWR) and 95-124 (LNYSIDFGICIFCGNCVEYCPTNCLSMTEE). The [4Fe-4S] cluster site is built by Cys64, Cys67, Cys70, Cys74, Cys104, Cys107, Cys110, and Cys114.

The protein belongs to the complex I 23 kDa subunit family. As to quaternary structure, NDH is composed of at least 16 different subunits, 5 of which are encoded in the nucleus. The cofactor is [4Fe-4S] cluster.

It localises to the plastid. It is found in the chloroplast thylakoid membrane. It catalyses the reaction a plastoquinone + NADH + (n+1) H(+)(in) = a plastoquinol + NAD(+) + n H(+)(out). The catalysed reaction is a plastoquinone + NADPH + (n+1) H(+)(in) = a plastoquinol + NADP(+) + n H(+)(out). NDH shuttles electrons from NAD(P)H:plastoquinone, via FMN and iron-sulfur (Fe-S) centers, to quinones in the photosynthetic chain and possibly in a chloroplast respiratory chain. The immediate electron acceptor for the enzyme in this species is believed to be plastoquinone. Couples the redox reaction to proton translocation, and thus conserves the redox energy in a proton gradient. The polypeptide is NAD(P)H-quinone oxidoreductase subunit I, chloroplastic (Liriodendron tulipifera (Tuliptree)).